The chain runs to 57 residues: MLKWALIFFVISIIAGFFGFSGVSAATATIARVLFGIALVIFLIFLVLALMAGQAIL.

2 helical membrane-spanning segments follow: residues 4–24 (WALIFFVISIIAGFFGFSGVS) and 33–53 (VLFGIALVIFLIFLVLALMAG).

It belongs to the UPF0391 family.

The protein resides in the cell membrane. The chain is UPF0391 membrane protein RL4195 from Rhizobium johnstonii (strain DSM 114642 / LMG 32736 / 3841) (Rhizobium leguminosarum bv. viciae).